The primary structure comprises 186 residues: Ran guanine nucleotide release factor (186 aa).

Residues 27-70 (DLRPVPDNQEVFCHPVTDQSLIVELLELQAHVRGEAAARYHFED) are interaction with RAN.

Belongs to the MOG1 family. Monomer. Interacts with RAN, both RAN-GTP and RAN-GDP. Competes with RCC1 for a common binding site on RAN and thereby inhibits RCC1-mediated nucleotide exchange. Forms a complex with RAN-GTP and RANBP1. Interacts with the cytoplasmic loop 2 of SCN5A. Isoform 1 and isoform 2 are ubiquitously expressed. Detected in heart and brain.

The protein localises to the nucleus. It localises to the cytoplasm. The protein resides in the perinuclear region. It is found in the cell membrane. May regulate the intracellular trafficking of RAN. Promotes guanine nucleotide release from RAN and inhibits binding of new GTP by preventing the binding of the RAN guanine nucleotide exchange factor RCC1. Regulates the levels of GTP-bound RAN in the nucleus, and thereby plays a role in the regulation of RAN-dependent mitotic spindle dynamics. Enhances the expression of SCN5A at the cell membrane in cardiomyocytes. The sequence is that of Ran guanine nucleotide release factor (RANGRF) from Homo sapiens (Human).